Consider the following 79-residue polypeptide: Conotoxin VnMKLT1-01122 (79 aa).

The signal sequence occupies residues 1 to 22 (MKLTCMKIVAVLFLTAWTFVTA). Positions 23–48 (DDSRNGLEYLFPKAHYEMNPEASKLN) are excised as a propeptide. At Gln51 the chain carries Pyrrolidone carboxylic acid. 3 disulfides stabilise this stretch: Cys53–Cys70, Cys60–Cys74, and Cys69–Cys78.

The protein belongs to the conotoxin O1 superfamily. In terms of tissue distribution, expressed by the venom duct.

It localises to the secreted. This is Conotoxin VnMKLT1-01122 from Conus ventricosus (Mediterranean cone).